A 352-amino-acid chain; its full sequence is D-alanine--D-alanine ligase A (352 aa).

The region spanning 138–341 (KRMVQSAGLV…PPKLVGALVE (204 aa)) is the ATP-grasp domain. Position 165 to 220 (165 to 220 (ECLGSSTLFVKPATSGSSIGVSRVSNALEYAAAFAIAAREDTKVLVEAAVCGREIE)) interacts with ATP. Mg(2+) contacts are provided by D295, E308, and N310.

It belongs to the D-alanine--D-alanine ligase family. It depends on Mg(2+) as a cofactor. Mn(2+) is required as a cofactor.

The protein resides in the cytoplasm. It carries out the reaction 2 D-alanine + ATP = D-alanyl-D-alanine + ADP + phosphate + H(+). The protein operates within cell wall biogenesis; peptidoglycan biosynthesis. Cell wall formation. This chain is D-alanine--D-alanine ligase A, found in Pseudomonas putida (strain ATCC 47054 / DSM 6125 / CFBP 8728 / NCIMB 11950 / KT2440).